A 222-amino-acid chain; its full sequence is Putative N-acetylmannosamine-6-phosphate 2-epimerase (222 aa).

It belongs to the NanE family.

It carries out the reaction an N-acyl-D-glucosamine 6-phosphate = an N-acyl-D-mannosamine 6-phosphate. Its pathway is amino-sugar metabolism; N-acetylneuraminate degradation; D-fructose 6-phosphate from N-acetylneuraminate: step 3/5. In terms of biological role, converts N-acetylmannosamine-6-phosphate (ManNAc-6-P) to N-acetylglucosamine-6-phosphate (GlcNAc-6-P). The chain is Putative N-acetylmannosamine-6-phosphate 2-epimerase from Staphylococcus aureus (strain USA300).